A 388-amino-acid polypeptide reads, in one-letter code: Pregnancy-associated glycoprotein (388 aa).

The first 15 residues, Met-1 to Cys-15, serve as a signal peptide directing secretion. The 312-residue stretch at Tyr-74–Ala-385 folds into the Peptidase A1 domain. Asp-92 is an active-site residue. 2 disulfide bridges follow: Cys-105/Cys-110 and Cys-266/Cys-270. Asp-275 is a catalytic residue. A disulfide bridge connects residues Cys-309 and Cys-344. An N-linked (GlcNAc...) asparagine glycan is attached at Asn-356.

The protein belongs to the peptidase A1 family. Trophoblast and placental tissue.

It localises to the secreted. It is found in the extracellular space. In Equus caballus (Horse), this protein is Pregnancy-associated glycoprotein (PAG).